The sequence spans 1488 residues: Chromosome partition protein MukB (1488 aa).

34–41 serves as a coordination point for ATP; the sequence is GGNGAGKS. Coiled coils occupy residues 326–413, 444–472, and 509–602; these read LEAD…QTRA, LDTF…QTAH, and RHLA…RRAP. The interval 666–783 is flexible hinge; that stretch reads PGGAEDQRLN…SLPIFGRAAR (118 aa). Coiled-coil stretches lie at residues 835 to 923, 977 to 1116, and 1209 to 1265; these read EAEI…AKLE, EMLS…AKAG, and VEAI…LQSV.

The protein belongs to the SMC family. MukB subfamily. Homodimerization via its hinge domain. Binds to DNA via its C-terminal region. Interacts, and probably forms a ternary complex, with MukE and MukF via its C-terminal region. The complex formation is stimulated by calcium or magnesium. Interacts with tubulin-related protein FtsZ.

It localises to the cytoplasm. The protein resides in the nucleoid. Functionally, plays a central role in chromosome condensation, segregation and cell cycle progression. Functions as a homodimer, which is essential for chromosome partition. Involved in negative DNA supercoiling in vivo, and by this means organize and compact chromosomes. May achieve or facilitate chromosome segregation by condensation DNA from both sides of a centrally located replisome during cell division. This is Chromosome partition protein MukB from Salmonella paratyphi C (strain RKS4594).